The chain runs to 324 residues: MELTGVIAQSIFDDNAADLKLSWVAGLEGADRAFDVDFAKEATSAADLVGHLNLIHPNRIQVLGKPEITYYQRLSEENRKRQMGELILLEPPFLVVADGVDPPPDLELRCTRSSTPLFTSPISSAAVIDHLRLYLSRISAPRVTMHGVFLDILGMGVLIMGDSGLGKSELGLELISRGHGLVADDAVDFVRLGPDFIEGRCPPLLQNLLEVRGLGLLDIKTIFGETAVRRKMKIKLIVQLVRRNDGEFERLPLDSQYLDVLGLPIHMVKIQVAAGRNLAVLVEAAVRNTILRLRGIDTLRDFMDRQRAAMQAEAASHSPQGRLL.

Catalysis depends on residues His146 and Lys167. Residue Gly161–Ser168 coordinates ATP. Ser168 provides a ligand contact to Mg(2+). Asp185 serves as the catalytic Proton acceptor; for phosphorylation activity. Proton donor; for dephosphorylation activity. The important for the catalytic mechanism of both phosphorylation and dephosphorylation stretch occupies residues Leu209–Asp218. Residue Glu210 participates in Mg(2+) binding. Residue Arg250 is part of the active site. Positions Gln271–Arg276 are important for the catalytic mechanism of dephosphorylation.

Belongs to the HPrK/P family. Homohexamer. It depends on Mg(2+) as a cofactor.

It catalyses the reaction [HPr protein]-L-serine + ATP = [HPr protein]-O-phospho-L-serine + ADP + H(+). It carries out the reaction [HPr protein]-O-phospho-L-serine + phosphate + H(+) = [HPr protein]-L-serine + diphosphate. Functionally, catalyzes the ATP- as well as the pyrophosphate-dependent phosphorylation of a specific serine residue in HPr, a phosphocarrier protein of the phosphoenolpyruvate-dependent sugar phosphotransferase system (PTS). HprK/P also catalyzes the pyrophosphate-producing, inorganic phosphate-dependent dephosphorylation (phosphorolysis) of seryl-phosphorylated HPr (P-Ser-HPr). The protein is HPr kinase/phosphorylase of Ralstonia pickettii (strain 12J).